Here is a 483-residue protein sequence, read N- to C-terminus: Probable cytochrome P450 517A4 (483 aa).

A helical membrane pass occupies residues 1–21 (MEIVNVLLFLIILFLVKDFVK). Cysteine 429 lines the heme pocket.

It belongs to the cytochrome P450 family. Heme serves as cofactor.

It is found in the membrane. This chain is Probable cytochrome P450 517A4 (cyp517A4), found in Dictyostelium discoideum (Social amoeba).